The following is a 1121-amino-acid chain: RecBCD enzyme subunit RecC (1121 aa).

This sequence belongs to the RecC family. As to quaternary structure, heterotrimer of RecB, RecC and RecD. All subunits contribute to DNA-binding.

Functionally, a helicase/nuclease that prepares dsDNA breaks (DSB) for recombinational DNA repair. Binds to DSBs and unwinds DNA via a highly rapid and processive ATP-dependent bidirectional helicase activity. Unwinds dsDNA until it encounters a Chi (crossover hotspot instigator) sequence from the 3' direction. Cuts ssDNA a few nucleotides 3' to the Chi site. The properties and activities of the enzyme are changed at Chi. The Chi-altered holoenzyme produces a long 3'-ssDNA overhang and facilitates RecA-binding to the ssDNA for homologous DNA recombination and repair. Holoenzyme degrades any linearized DNA that is unable to undergo homologous recombination. In the holoenzyme this subunit recognizes the wild-type Chi sequence, and when added to isolated RecB increases its ATP-dependent helicase processivity. The polypeptide is RecBCD enzyme subunit RecC (Haemophilus influenzae (strain ATCC 51907 / DSM 11121 / KW20 / Rd)).